A 495-amino-acid chain; its full sequence is Probable cytochrome P450 513C1 (495 aa).

The helical transmembrane segment at 1-21 threads the bilayer; that stretch reads MNYLVLILVSLVSIYFLFIKN. Cys441 is a heme binding site.

The protein belongs to the cytochrome P450 family. Heme serves as cofactor.

The protein localises to the membrane. The sequence is that of Probable cytochrome P450 513C1 (cyp513C1) from Dictyostelium discoideum (Social amoeba).